The sequence spans 247 residues: Ribosomal RNA processing protein 36 homolog (247 aa).

Disordered stretches follow at residues 1–29, 62–89, 136–188, and 218–247; these read MDNQ…HLKD, RTQG…QRVP, SVEK…RELV, and GKLQ…QVDQ. Residues 8–23 show a composition bias toward acidic residues; it reads SSDDESPTDDCSDEGE. Composition is skewed to basic and acidic residues over residues 136–153 and 164–174; these read SVEK…RKNL and ERSRKSAEAKR. Residues 218-240 are compositionally biased toward basic residues; that stretch reads GKLQKYLTKRRKKTASKDRRHVP.

It belongs to the RRP36 family.

The protein localises to the nucleus. Its subcellular location is the nucleolus. Its function is as follows. Involved in the early processing steps of the pre-rRNA in the maturation pathway leading to the 18S rRNA. The protein is Ribosomal RNA processing protein 36 homolog of Nematostella vectensis (Starlet sea anemone).